Here is a 495-residue protein sequence, read N- to C-terminus: MNTHVKPSKLIKGATGDWEIIIGLEVHAQVTSRSKLFSGASTQFGAEPNSNVSLVDAAMPGMLPVINEECVAQAVRTGLGLKAQINLRSVFDRKNYFYPDLPQGYQISQYKSPIVGEGIVIVDVSPTEQIEVGIERLHLEQDAGKSLHDQSATDSFVDLNRSGVALMEIVSKPDMRSADEARAYVSKLRTILRYLGTCDGNMEQGSLRADVNVSVRRPGEPFGTRCEIKNVNSIRFIGQAIETEARRQIGILEDGGVIDQETRLFDPGKGETRSMRSKEEAHDYRYFPDPDLLPLEFDQAYVDGLASALPELPDAKKARFMNDYGLPAYDAGVLVADKETADYYETTVNYNGVKRDPKLVANWVTGDVAAYANSVGLPVSQTHLTPAQIATLVDLISEEVISGKIAKDVLAILINEDKAGDPRTIVEARGLKQVTDTGAIEAAVDAIIAANPDKVAQAQAKPTMLGWFVGQVMKQTGGKANPQAVNEILKAKLGI.

This sequence belongs to the GatB/GatE family. GatB subfamily. In terms of assembly, heterotrimer of A, B and C subunits.

The enzyme catalyses L-glutamyl-tRNA(Gln) + L-glutamine + ATP + H2O = L-glutaminyl-tRNA(Gln) + L-glutamate + ADP + phosphate + H(+). It carries out the reaction L-aspartyl-tRNA(Asn) + L-glutamine + ATP + H2O = L-asparaginyl-tRNA(Asn) + L-glutamate + ADP + phosphate + 2 H(+). Allows the formation of correctly charged Asn-tRNA(Asn) or Gln-tRNA(Gln) through the transamidation of misacylated Asp-tRNA(Asn) or Glu-tRNA(Gln) in organisms which lack either or both of asparaginyl-tRNA or glutaminyl-tRNA synthetases. The reaction takes place in the presence of glutamine and ATP through an activated phospho-Asp-tRNA(Asn) or phospho-Glu-tRNA(Gln). The protein is Aspartyl/glutamyl-tRNA(Asn/Gln) amidotransferase subunit B of Beijerinckia indica subsp. indica (strain ATCC 9039 / DSM 1715 / NCIMB 8712).